The sequence spans 289 residues: Elongation factor Ts (289 aa).

The segment at 82-85 is involved in Mg(2+) ion dislocation from EF-Tu; it reads TDFV.

The protein belongs to the EF-Ts family.

The protein localises to the cytoplasm. Its function is as follows. Associates with the EF-Tu.GDP complex and induces the exchange of GDP to GTP. It remains bound to the aminoacyl-tRNA.EF-Tu.GTP complex up to the GTP hydrolysis stage on the ribosome. The sequence is that of Elongation factor Ts from Marinobacter nauticus (strain ATCC 700491 / DSM 11845 / VT8) (Marinobacter aquaeolei).